The primary structure comprises 149 residues: NPC intracellular cholesterol transporter 2 (149 aa).

Positions 1–19 (MHFLAAAFLLLTLSASALA) are cleaved as a signal peptide. 3 disulfides stabilise this stretch: Cys27–Cys140, Cys42–Cys47, and Cys93–Cys99. Asn58 is a glycosylation site (N-linked (GlcNAc...) asparagine). An N6-acetyllysine modification is found at Lys116.

It belongs to the NPC2 family. In terms of assembly, interacts with NPC1 (via the second lumenal domain) in a cholestrol-dependent manner. Interacts with NUS1/NgBR, the interaction stabilizes NCP2 and regulates cholesterol trafficking. Interacts with DHDDS. Interacts with NEDD4L (via C2 domain). Interacts with NPC1L1. Post-translationally, N-glycosylated. Found in the epididymal fluid as a 19 kDa glycoprotein that is processed during its passage through the epididymis into a 16 kDa protein. Found in the fluid from the distal caput to cauda epididymis, not detected in the rete testis and the proximal and middle caput epididymal fluids (at protein level).

It is found in the secreted. The protein resides in the endoplasmic reticulum. The protein localises to the lysosome. The enzyme catalyses cholesterol(in) = cholesterol(out). In terms of biological role, intracellular cholesterol transporter which acts in concert with NPC1 and plays an important role in the egress of cholesterol from the lysosomal compartment. Unesterified cholesterol that has been released from LDLs in the lumen of the late endosomes/lysosomes is transferred by NPC2 to the cholesterol-binding pocket in the N-terminal domain of NPC1. May bind and mobilize cholesterol that is associated with membranes. NPC2 binds cholesterol with a 1:1 stoichiometry. Can bind a variety of sterols, including lathosterol, desmosterol and the plant sterols stigmasterol and beta-sitosterol. The secreted form of NCP2 regulates biliary cholesterol secretion via stimulation of ABCG5/ABCG8-mediated cholesterol transport. In Sus scrofa (Pig), this protein is NPC intracellular cholesterol transporter 2.